The primary structure comprises 904 residues: Endoplasmic reticulum metallopeptidase 1 (904 aa).

Residue methionine 1 is modified to N-acetylmethionine. At 1 to 63 the chain is on the cytoplasmic side; that stretch reads MEWGSESAAV…PGGSGGASRG (63 aa). A disordered region spans residues 1–65; it reads MEWGSESAAV…GSGGASRGAG (65 aa). Residues 55–65 are compositionally biased toward gly residues; it reads GGSGGASRGAG. Residues 64–84 traverse the membrane as a helical segment; sequence AGTGLSEVRAALGLALYLIAL. The Lumenal portion of the chain corresponds to 85–399; that stretch reads RTLVQLSLQQ…AASKYRHGNM (315 aa). N-linked (GlcNAc...) asparagine glycosylation is present at asparagine 182. An intrachain disulfide couples cysteine 204 to cysteine 222. Histidine 205 and aspartate 217 together coordinate Zn(2+). The Proton acceptor role is filled by glutamate 251. Residues glutamate 252, glutamate 278, and histidine 354 each coordinate Zn(2+). The helical transmembrane segment at 400–420 threads the bilayer; that stretch reads VFFDVLGLFVIAYPSRIGSII. Residues 421–457 are Cytoplasmic-facing; the sequence is NYMVVMGVVLYLGKKFLQPKHKTGNYKKDFLCGLGIT. Residues 458–478 form a helical membrane-spanning segment; the sequence is LISWFTSLVTVLIIAVFISLI. Residues 479–489 are Lumenal-facing; that stretch reads GQSLSWYNHFY. Residues 490-510 traverse the membrane as a helical segment; that stretch reads VSVCLYGTATVAKIILIHTLA. Over 511 to 519 the chain is Cytoplasmic; sequence KRFYYMNAS. Residues 520-540 form a helical membrane-spanning segment; sequence AQYLGEVFFDISLFVHCCFLV. Threonine 541 is a topological domain (lumenal). The helical transmembrane segment at 542 to 562 threads the bilayer; that stretch reads LTYQGLCSAFISAVWVAFPLL. Residues 563–579 lie on the Cytoplasmic side of the membrane; sequence TKLCVHKDFKQHGAQGK. The helical transmembrane segment at 580–600 threads the bilayer; the sequence is FIAFYLLGMFIPYLYALYLIW. The Lumenal portion of the chain corresponds to 601 to 621; it reads AVFEMFTPILGRSGSEIPPDV. Residues 622 to 642 traverse the membrane as a helical segment; that stretch reads VLASILAGCTMILSSYFINFI. The Cytoplasmic segment spans residues 643–651; that stretch reads YLAKSTKKT. A helical membrane pass occupies residues 652–672; it reads MLTLTLVCAITFLLVCSGTFF. Topologically, residues 673-904 are lumenal; sequence PYSSNPANPK…WVCTYDLFVF (232 aa). The N-linked (GlcNAc...) asparagine glycan is linked to asparagine 730.

It belongs to the peptidase M28 family. The cofactor is Zn(2+).

The protein localises to the endoplasmic reticulum membrane. In terms of biological role, within the ovary, required for the organization of somatic cells and oocytes into discrete follicular structures. This is Endoplasmic reticulum metallopeptidase 1 from Homo sapiens (Human).